Reading from the N-terminus, the 417-residue chain is Maltodextrin-binding protein MdxE (417 aa).

A signal peptide spans 1–22 (MVLLKKGFAILAASFLAIGLAA). Cysteine 23 carries the N-palmitoyl cysteine lipid modification. A lipid anchor (S-diacylglycerol cysteine) is attached at cysteine 23.

The protein belongs to the bacterial solute-binding protein 1 family. As to quaternary structure, the complex is composed of two ATP-binding proteins (MsmX), two transmembrane proteins (MdxF and MdxG) and a solute-binding protein (MdxE).

It localises to the cell membrane. With respect to regulation, inhibited by glucose and lactose. Functionally, part of the ABC transporter complex involved in maltodextrin import. Binds maltodextrin. Can also bind maltose with low affinity, but is not involved in its uptake. The chain is Maltodextrin-binding protein MdxE (mdxE) from Bacillus subtilis (strain 168).